Here is a 156-residue protein sequence, read N- to C-terminus: ATP synthase subunit b (156 aa).

The chain crosses the membrane as a helical span at residues 11-31 (LIAFVVFVIFCMKYVWPPIIG).

This sequence belongs to the ATPase B chain family. F-type ATPases have 2 components, F(1) - the catalytic core - and F(0) - the membrane proton channel. F(1) has five subunits: alpha(3), beta(3), gamma(1), delta(1), epsilon(1). F(0) has three main subunits: a(1), b(2) and c(10-14). The alpha and beta chains form an alternating ring which encloses part of the gamma chain. F(1) is attached to F(0) by a central stalk formed by the gamma and epsilon chains, while a peripheral stalk is formed by the delta and b chains.

The protein resides in the cell inner membrane. F(1)F(0) ATP synthase produces ATP from ADP in the presence of a proton or sodium gradient. F-type ATPases consist of two structural domains, F(1) containing the extramembraneous catalytic core and F(0) containing the membrane proton channel, linked together by a central stalk and a peripheral stalk. During catalysis, ATP synthesis in the catalytic domain of F(1) is coupled via a rotary mechanism of the central stalk subunits to proton translocation. Functionally, component of the F(0) channel, it forms part of the peripheral stalk, linking F(1) to F(0). This chain is ATP synthase subunit b, found in Colwellia psychrerythraea (strain 34H / ATCC BAA-681) (Vibrio psychroerythus).